A 380-amino-acid polypeptide reads, in one-letter code: Cytochrome b (380 aa).

A run of 4 helical transmembrane segments spans residues 34-54 (FGSL…LLAM), 78-99 (WLIR…YLHI), 114-134 (WNTG…GYVL), and 179-199 (FFAL…IHLT). 2 residues coordinate heme b: histidine 84 and histidine 98. Heme b is bound by residues histidine 183 and histidine 197. Histidine 202 is an a ubiquinone binding site. The next 4 membrane-spanning stretches (helical) occupy residues 227 to 247 (LKDF…ALFT), 289 to 309 (LGGV…PFLH), 321 to 341 (LSQT…WIGS), and 348 to 368 (FITI…ILFP).

Belongs to the cytochrome b family. In terms of assembly, the cytochrome bc1 complex contains 11 subunits: 3 respiratory subunits (MT-CYB, CYC1 and UQCRFS1), 2 core proteins (UQCRC1 and UQCRC2) and 6 low-molecular weight proteins (UQCRH/QCR6, UQCRB/QCR7, UQCRQ/QCR8, UQCR10/QCR9, UQCR11/QCR10 and a cleavage product of UQCRFS1). This cytochrome bc1 complex then forms a dimer. Requires heme b as cofactor.

The protein resides in the mitochondrion inner membrane. Its function is as follows. Component of the ubiquinol-cytochrome c reductase complex (complex III or cytochrome b-c1 complex) that is part of the mitochondrial respiratory chain. The b-c1 complex mediates electron transfer from ubiquinol to cytochrome c. Contributes to the generation of a proton gradient across the mitochondrial membrane that is then used for ATP synthesis. This Coracias caudatus (Lilac-breasted roller) protein is Cytochrome b (MT-CYB).